The primary structure comprises 93 residues: YcgL domain-containing protein VSAL_I1068 (93 aa).

In terms of domain architecture, YcgL spans 1–84; that stretch reads MYCSIYKSSK…PPENLLEKYK (84 aa).

This is YcgL domain-containing protein VSAL_I1068 from Aliivibrio salmonicida (strain LFI1238) (Vibrio salmonicida (strain LFI1238)).